A 144-amino-acid chain; its full sequence is MNFKYIVAVSFLIASAYARSEENEIQSLSQRDVLEEESLREIRGIGTKILGGVKTALKGALKELASTYVNGKRTAEEHEVMKRLETVMRDLDSLDYPEEASERETRGFNQEEIANLFTKKEKRILGPVLGLVSNALGGLLKNIG.

The signal sequence occupies residues 1 to 18; the sequence is MNFKYIVAVSFLIASAYA. The propeptide occupies 19–43; the sequence is RSEENEIQSLSQRDVLEEESLREIR. At asparagine 70 the chain carries Asparagine amide. Positions 74-123 are excised as a propeptide; the sequence is TAEEHEVMKRLETVMRDLDSLDYPEEASERETRGFNQEEIANLFTKKEKR. Isoleucine 143 is subject to Isoleucine amide.

The protein belongs to the bombinin family. In terms of tissue distribution, expressed by the skin glands.

It is found in the secreted. Its function is as follows. Maximin-2 shows antibacterial activity against both Gram-positive and Gram-negative bacteria. It also shows antimicrobial activity against the fungus C.albicans, but not against A.flavus nor P.uticale. It has little hemolytic activity. Functionally, maximin-H8 shows antimicrobial activity against bacteria and against the fungus C.albicans. Shows strong hemolytic activity. In Bombina maxima (Giant fire-bellied toad), this protein is Maximins 2/H8 type 2.